Consider the following 883-residue polypeptide: DNA mismatch repair protein MutS (883 aa).

An ATP-binding site is contributed by 633–640 (GPNMGGKS).

Belongs to the DNA mismatch repair MutS family.

Functionally, this protein is involved in the repair of mismatches in DNA. It is possible that it carries out the mismatch recognition step. This protein has a weak ATPase activity. The polypeptide is DNA mismatch repair protein MutS (Bordetella pertussis (strain Tohama I / ATCC BAA-589 / NCTC 13251)).